We begin with the raw amino-acid sequence, 55 residues long: Bowman-Birk type proteinase inhibitor B1 (55 aa).

Intrachain disulfides connect C6-C53, C12-C17, C26-C33, and C30-C45.

The protein belongs to the Bowman-Birk serine protease inhibitor family. In terms of tissue distribution, expressed in bulb (at protein level).

Its function is as follows. Serine protease inhibitor. Weakly inhibits trypsin (Ki = 167 nM). Does not inhibit bacterial subtilisin or mamallian chymotrypsin. The polypeptide is Bowman-Birk type proteinase inhibitor B1 (Hyacinthus orientalis (Common hyacinth)).